We begin with the raw amino-acid sequence, 233 residues long: High-affinity branched-chain amino acid transport ATP-binding protein BraG (233 aa).

Residues leucine 2 to glycine 233 enclose the ABC transporter domain. Glycine 34–serine 41 lines the ATP pocket.

Belongs to the ABC transporter superfamily.

It localises to the cell inner membrane. Its function is as follows. Component of the high affinity leucine, isoleucine, valine, transport system (LIV-I), which is operative without Na(+) and is specific for alanine and threonine, in addition to branched-chain amino acids. This Pseudomonas aeruginosa (strain ATCC 15692 / DSM 22644 / CIP 104116 / JCM 14847 / LMG 12228 / 1C / PRS 101 / PAO1) protein is High-affinity branched-chain amino acid transport ATP-binding protein BraG (braG).